Consider the following 703-residue polypeptide: MSRADPGKNSEPSESKMSLELRPTAPSDLGRSNEAFQDEDLERQNTPGNSTVRNRVVQSGEQGHAKQDDRQITIEQEPLGNKEDPEDDSEDEHQKGFLERKYDTICEFCRKHRVVLRSTIWAVLLTGFLALVIAACAINFHRALPLFVITLVTIFFVIWDHLMAKYEQRIDDFLSPGRRLLDRHWFWLKWVVWSSLILAIILWLSLDTAKLGQQNLVSFGGLIMYLILLFLFSKHPTRVYWRPVFWGIGLQFLLGLLILRTRPGFVAFDWMGRQVQTFLGYTDTGARFVFGEKYTDHFFAFKILPIVVFFSTVMSMLYYLGLMQWIIRKVGWLMLVTMGSSPIESVVAAGNIFIGQTESPLLVQPYLPHVTKSELHTIMTAGFATIAGSVLGAYISFGVSSTHLLTASVMSAPAALAVAKLFWPETEKPKITLKSAMKMENGDSRNLLEAASQGASSSIPLVANIAANLIAFLALLSFVNSALSWFGSMFNYPELSFELICSYIFMPFSFMMGVDWQDSFMVAKLIGYKTFFNEFVAYDHLSKLINLRKAAGPKFVNGVQQYMSIRSETIATYALCGFANFGSLGIVIGGLTSIAPSRKRDIASGAMRALIAGTIACFMTACIAGILSDTPVDINCHHVLENGRVLSNTTEVVSCCQNLFNSTVAKGPNDVVPGGNFSLYALKSCCNLLKPPTLNCNWIPNKL.

Residues 1-19 (MSRADPGKNSEPSESKMSL) show a composition bias toward basic and acidic residues. The tract at residues 1–93 (MSRADPGKNS…DPEDDSEDEH (93 aa)) is disordered. The Cytoplasmic portion of the chain corresponds to 1–117 (MSRADPGKNS…FCRKHRVVLR (117 aa)). The span at 44–61 (QNTPGNSTVRNRVVQSGE) shows a compositional bias: polar residues. Residues 63-72 (GHAKQDDRQI) show a composition bias toward basic and acidic residues. The chain crosses the membrane as a helical span at residues 118 to 138 (STIWAVLLTGFLALVIAACAI). At 139–143 (NFHRA) the chain is on the extracellular side. The helical transmembrane segment at 144-164 (LPLFVITLVTIFFVIWDHLMA) threads the bilayer. At 165-188 (KYEQRIDDFLSPGRRLLDRHWFWL) the chain is on the cytoplasmic side. Residues 189–209 (KWVVWSSLILAIILWLSLDTA) traverse the membrane as a helical segment. Topologically, residues 210–212 (KLG) are extracellular. Residues 213-234 (QQNLVSFGGLIMYLILLFLFSK) traverse the membrane as a helical segment. Topologically, residues 235–242 (HPTRVYWR) are cytoplasmic. Residues 243–262 (PVFWGIGLQFLLGLLILRTR) traverse the membrane as a helical segment. Over 263 to 299 (PGFVAFDWMGRQVQTFLGYTDTGARFVFGEKYTDHFF) the chain is Extracellular. Residues 300-320 (AFKILPIVVFFSTVMSMLYYL) form a helical membrane-spanning segment. The Cytoplasmic segment spans residues 321–344 (GLMQWIIRKVGWLMLVTMGSSPIE). The segment at residues 345-363 (SVVAAGNIFIGQTESPLLV) is an intramembrane region (helical). The Cytoplasmic segment spans residues 364 to 376 (QPYLPHVTKSELH). A helical transmembrane segment spans residues 377 to 399 (TIMTAGFATIAGSVLGAYISFGV). Over 400–401 (SS) the chain is Extracellular. A helical transmembrane segment spans residues 402 to 423 (THLLTASVMSAPAALAVAKLFW). Residues 424–458 (PETEKPKITLKSAMKMENGDSRNLLEAASQGASSS) lie on the Cytoplasmic side of the membrane. A helical transmembrane segment spans residues 459-484 (IPLVANIAANLIAFLALLSFVNSALS). Residues 485–522 (WFGSMFNYPELSFELICSYIFMPFSFMMGVDWQDSFMV) lie on the Extracellular side of the membrane. Residues 523 to 542 (AKLIGYKTFFNEFVAYDHLS) constitute an intramembrane region (helical). Topologically, residues 543–581 (KLINLRKAAGPKFVNGVQQYMSIRSETIATYALCGFANF) are extracellular. Residues 582 to 592 (GSLGIVIGGLT) form a helical membrane-spanning segment. Residues 593–605 (SIAPSRKRDIASG) are Cytoplasmic-facing. Residues 606–628 (AMRALIAGTIACFMTACIAGILS) form a helical membrane-spanning segment. Topologically, residues 629–703 (DTPVDINCHH…LNCNWIPNKL (75 aa)) are extracellular.

Belongs to the concentrative nucleoside transporter (CNT) (TC 2.A.41) family. In terms of assembly, homotrimer.

The protein resides in the cell membrane. The catalysed reaction is thymidine(out) + 2 Na(+)(out) = thymidine(in) + 2 Na(+)(in). It carries out the reaction cytidine(out) + 2 Na(+)(out) = cytidine(in) + 2 Na(+)(in). The enzyme catalyses uridine(out) + 2 Na(+)(out) = uridine(in) + 2 Na(+)(in). It catalyses the reaction adenosine(out) + 2 Na(+)(out) = adenosine(in) + 2 Na(+)(in). The catalysed reaction is guanosine(out) + 2 Na(+)(out) = guanosine(in) + 2 Na(+)(in). It carries out the reaction inosine(out) + 2 Na(+)(out) = inosine(in) + 2 Na(+)(in). Sodium-dependent, pyrimidine- and purine-selective. Involved in the homeostasis of endogenous nucleosides. Exhibits the transport characteristics of the nucleoside transport system cib or N3 subtype (N3/cib) (with marked transport of both thymidine and inosine). Employs a 2:1 sodium/nucleoside ratio. Also able to transport gemcitabine, 3'-azido-3'-deoxythymidine (AZT), ribavirin and 3-deazauridine. This chain is Solute carrier family 28 member 3 (Slc28a3), found in Mus musculus (Mouse).